The primary structure comprises 131 residues: Protein Turandot M (131 aa).

The N-terminal stretch at 1-23 (MNPTVYLSCLVVFSLFYLGKAQA) is a signal peptide.

Belongs to the Turandot family.

Its subcellular location is the secreted. Its function is as follows. A humoral factor that may play a role in stress tolerance. Requires Mekk1 expression in the fat body to regulate response to septic injury and consequent immune response. This is Protein Turandot M from Drosophila yakuba (Fruit fly).